The chain runs to 1135 residues: Envelopment polyprotein (1135 aa).

A signal peptide spans 1 to 35 (MRILKLLELVVKVSLFTIALSSVLLAFLTFRATDA). The Lumenal segment spans residues 36 to 314 (KVEIIRGDHP…KYSKSIYKQT (279 aa)). Residues 41-43 (RGD) carry the Cell attachment site motif. A glycan (N-linked (GlcNAc...) asparagine; by host) is linked at Asn116. A disulfide bond links Cys122 and Cys156. The tract at residues 177-195 (LDNKRHFSVGTNFFIPESL) is non-covalent dimerization. N-linked (GlcNAc...) asparagine; by host glycosylation occurs at Asn210. An intrachain disulfide couples Cys224 to Cys285. The helical transmembrane segment at 315–366 (ACINFSWIRLILIALLIYFPIRWLVNKTTKPLFLWYDLMGLITYPVLLLINC) threads the bilayer. Residues 367–484 (LWKYFPFKCS…VPGCPFLVTS (118 aa)) lie on the Cytoplasmic side of the membrane. The segment at 437–484 (LSLSLLKFVTEILIGLVILSQIPMSMAQTTQCLSGCFYVPGCPFLVTS) is signal for signal peptide peptidase. Over 485 to 1067 (KFEKCPEKDQ…YFGSFFDTIR (583 aa)) the chain is Lumenal. Residues Asn588, Asn605, and Asn980 are each glycosylated (N-linked (GlcNAc...) asparagine; by host). A helical transmembrane segment spans residues 1068-1088 (VVLLIAFIFLVIYFCSILTSI). At 1089–1135 (CKGYVKHKSYKSRSKIEDDDEPEIKAPMLMKDTMTRRRPPMDFSHLV) the chain is on the cytoplasmic side.

This sequence belongs to the tospovirus envelope glycoprotein family. Homodimer; disulfide-linked. Heterodimer with Glycoprotein C. Interacts with nucleoprotein. In terms of assembly, heterodimer with Glycoprotein N. Interacts with nucleoprotein. In terms of processing, specific enzymatic cleavages in vivo yield mature proteins including Glycoprotein N and Glycoprotein C. Glycosylated with O-linked glycans. Glycosylation is essential for proper subcellular location. Post-translationally, cleaved at acidic pH.

It is found in the virion membrane. Its subcellular location is the host Golgi apparatus membrane. It localises to the host endoplasmic reticulum membrane. In terms of biological role, forms the spikes present at the surface of the virion together with Glycoprotein C. They are able to attach the virion to a cell receptor and to promote fusion of membranes after endocytosis of the virion. Plays a role in virus binding and/or entry into the vector midgut. Functionally, forms the spikes present at the surface of the virion together with Glycoprotein N. They are able to attach the virion to a cell receptor and to promote fusion of membranes after endocytosis of the virion. Probable class II fusion protein. The chain is Envelopment polyprotein (GP) from Frankliniella occidentalis (Western flower thrips).